A 266-amino-acid chain; its full sequence is Decarboxylase tropJ (266 aa).

The active-site Proton acceptor is the Glu-80. 4 residues coordinate Zn(2+): Glu-80, His-99, His-101, and His-180.

Belongs to the aldolase class II family. It depends on Zn(2+) as a cofactor.

The protein operates within secondary metabolite biosynthesis. Functionally, decarboxylase; part of the gene cluster that mediates the biosynthesis of the tropolone class of fungal maleic anhydrides. The pathway begins with the synthesis of 3-methylorcinaldehyde by the non-reducing polyketide synthase (PKS) tropA. 3-methylorcinaldehyde is the substrate for the FAD-dependent monooxygenase tropB to yield a dearomatized hydroxycyclohexadione. The 2-oxoglutarate-dependent dioxygenase tropC then performs the oxidative ring expansion to provide the first tropolone metabolite stipitaldehyde. Trop D converts stipitaldehyde into stipitacetal which is in turn converted to stipitalide by the short-chain dehydrogenase/reductase tropE. The next steps involve tropF, tropG, tropH, tropI and tropJ to form successive tropolone maleic anhydrides including stipitaldehydic, stipitatonic and stipitatic acids. This is Decarboxylase tropJ from Talaromyces stipitatus (strain ATCC 10500 / CBS 375.48 / QM 6759 / NRRL 1006) (Penicillium stipitatum).